Here is a 166-residue protein sequence, read N- to C-terminus: Large ribosomal subunit protein uL10 (166 aa).

The protein belongs to the universal ribosomal protein uL10 family. Part of the ribosomal stalk of the 50S ribosomal subunit. The N-terminus interacts with L11 and the large rRNA to form the base of the stalk. The C-terminus forms an elongated spine to which L12 dimers bind in a sequential fashion forming a multimeric L10(L12)X complex.

Functionally, forms part of the ribosomal stalk, playing a central role in the interaction of the ribosome with GTP-bound translation factors. The protein is Large ribosomal subunit protein uL10 of Pseudomonas syringae pv. syringae (strain B728a).